A 175-amino-acid chain; its full sequence is Co-chaperone protein HscB homolog (175 aa).

Residues 7–79 enclose the J domain; the sequence is SHFDLFHLPA…LKRASYLLSL (73 aa).

Belongs to the HscB family. Interacts with HscA and stimulates its ATPase activity.

Functionally, co-chaperone involved in the maturation of iron-sulfur cluster-containing proteins. Seems to help targeting proteins to be folded toward HscA. This is Co-chaperone protein HscB homolog from Burkholderia cenocepacia (strain ATCC BAA-245 / DSM 16553 / LMG 16656 / NCTC 13227 / J2315 / CF5610) (Burkholderia cepacia (strain J2315)).